Here is a 251-residue protein sequence, read N- to C-terminus: Methylthioribulose-1-phosphate dehydratase (251 aa).

The tract at residues 1–26 (MTSVCDATNEDKENGSESTESQDKEH) is disordered. Residues 9-26 (NEDKENGSESTESQDKEH) are compositionally biased toward basic and acidic residues. A substrate-binding site is contributed by C100. 2 residues coordinate Zn(2+): H118 and H120. The active-site Proton donor/acceptor is E142. H198 is a binding site for Zn(2+). The tract at residues 232–251 (MDPSAPPIEENHYYDVQQSQ) is disordered.

This sequence belongs to the aldolase class II family. MtnB subfamily. Zn(2+) is required as a cofactor.

The protein localises to the cytoplasm. It carries out the reaction 5-(methylsulfanyl)-D-ribulose 1-phosphate = 5-methylsulfanyl-2,3-dioxopentyl phosphate + H2O. It participates in amino-acid biosynthesis; L-methionine biosynthesis via salvage pathway; L-methionine from S-methyl-5-thio-alpha-D-ribose 1-phosphate: step 2/6. Its function is as follows. Catalyzes the dehydration of methylthioribulose-1-phosphate (MTRu-1-P) into 2,3-diketo-5-methylthiopentyl-1-phosphate (DK-MTP-1-P). Functions in the methionine salvage pathway. May play a role in apoptosis. The protein is Methylthioribulose-1-phosphate dehydratase of Salmo salar (Atlantic salmon).